The primary structure comprises 365 residues: L-lactate oxidase (365 aa).

Residues 2 to 365 enclose the FMN hydroxy acid dehydrogenase domain; the sequence is TAISSPINLF…QDIDTSFLHL (364 aa). Y28 serves as a coordination point for pyruvate. FMN is bound by residues 81 to 83, S110, and Q135; that span reads PMA. Pyruvate is bound at residue Y137. T163 contacts FMN. Position 172 (R172) interacts with pyruvate. Positions 239 and 261 each coordinate FMN. H263 and R266 together coordinate pyruvate. The active-site Proton acceptor is H263. FMN is bound by residues 294-298 and R318; that span reads DGGIR.

Belongs to the FMN-dependent alpha-hydroxy acid dehydrogenase family. As to quaternary structure, homotetramer. FMN serves as cofactor.

The catalysed reaction is (S)-lactate + O2 = pyruvate + H2O2. It catalyses the reaction glyoxylate + O2 + H2O = oxalate + H2O2 + H(+). Catalyzes the oxidation of (S)-lactate (L-lactate) to pyruvate, with a reduction of O2 to H2O2. In extant N2-fixing cyanobacteria such as Nostoc, this enzyme primarily serves as an O2-scavenging enzyme, protecting nitrogenase that is extremely sensitive to O2, and is therefore an essential partner in N2 fixation. Also shows clear oxidase activity with glyoxylate in vitro, and low activity with glycerate, hydroxypyruvate and glycolate. The very low glycolate oxidase activity indicates that this enzyme is unlikely to be involved in photorespiratory glycolate metabolism, a pathway that seems to exist in this cyanobacterium, but in which the oxidation of glycolate is taken over by glycolate dehydrogenase (GlcD). Is not able to use D-lactate as substrate and does not show any dehydrogenase activity with NAD(+) or NADP(+). The protein is L-lactate oxidase of Nostoc sp. (strain PCC 7120 / SAG 25.82 / UTEX 2576).